The chain runs to 810 residues: LPS-assembly protein LptD (810 aa).

A signal peptide spans 1–29 (MTKRTLGYSYPIALTISLVPALTPAIVQA).

The protein belongs to the LptD family. Component of the lipopolysaccharide transport and assembly complex. Interacts with LptE and LptA.

The protein localises to the cell outer membrane. Together with LptE, is involved in the assembly of lipopolysaccharide (LPS) at the surface of the outer membrane. The protein is LPS-assembly protein LptD of Aeromonas hydrophila subsp. hydrophila (strain ATCC 7966 / DSM 30187 / BCRC 13018 / CCUG 14551 / JCM 1027 / KCTC 2358 / NCIMB 9240 / NCTC 8049).